A 692-amino-acid polypeptide reads, in one-letter code: Methionine--tRNA ligase (692 aa).

The 'HIGH' region signature appears at 15-25 (PYANGPIHLGH). Zn(2+)-binding residues include Cys-146, Cys-149, Cys-159, and Cys-162. The short motif at 332–336 (KMSKS) is the 'KMSKS' region element. Lys-335 provides a ligand contact to ATP. Residues 552–577 (TTEAAPEKKAKKSAETADVAVDTRSP) are disordered. The segment covering 556 to 566 (APEKKAKKSAE) has biased composition (basic and acidic residues). The region spanning 591–692 (DFAKLDLRIA…EGAQPGMRVK (102 aa)) is the tRNA-binding domain.

It belongs to the class-I aminoacyl-tRNA synthetase family. MetG type 1 subfamily. Homodimer. Zn(2+) serves as cofactor.

It is found in the cytoplasm. The enzyme catalyses tRNA(Met) + L-methionine + ATP = L-methionyl-tRNA(Met) + AMP + diphosphate. Functionally, is required not only for elongation of protein synthesis but also for the initiation of all mRNA translation through initiator tRNA(fMet) aminoacylation. This is Methionine--tRNA ligase from Shewanella sediminis (strain HAW-EB3).